Consider the following 705-residue polypeptide: MAEEKQLFSTEISGKKFTVEVGELAKQANGACMIHYGDTSVLSVATASSEPKDLPFFPLTVNYEERLYAVGKIPGGFIKREGRPSEKAILSSRLIDRPIRPLFPDGFRNEVQVISTVMSVDQDCPSEIAAMIGSSIALSVSDIPFEQPIAGVNVGRVDGEFIINPTIEQEAKSDIELTVAGTKDAINMVEAGANEVPEDIMLEAIMFGHEEIKRLVAFQEELVKACGQDKFDVVLAESEEELVENVHSEAKDKIVNAIQVQEKHARDEAIKQAKNEIVAHYEEQEVEEDVIKQVKSILDSMVKEEVRRLITKEKIRPDGRKVDEIRPLSSRIHVLPRTHGSGLFTRGQTQALSVCTLGALGDVQILDGLDLEESKRFMHHYNFPQYSVGETGPIRGPGRREIGHGALGERALEKVIPDDKEFPYTIRLVSEVLESNGSTSQASICASTLAMMDAGVPIKAPVAGIAMGLVKSGDDYTILTDIQGMEDALGDMDFKVAGTANGVTALQMDIKIDGLSRDILEEALSQAKKGRMQILDSMLATIKEPKEELSEFAPKILTMAIEPDKIRDVIGPSGKQINQIIDETGVKIDIEQDGSIFISSTDNEMNKKAKQIIEDLVREVEVGQIYLGKVKRIEKFGAFVELFKGKDGLVHISELAEERTNKVEDVVSIDDQIMVKVKEIDRQGRVNLSRKAVIQDEKKAKEQAK.

Asp487 and Asp493 together coordinate Mg(2+). One can recognise a KH domain in the interval 554-613 (PKILTMAIEPDKIRDVIGPSGKQINQIIDETGVKIDIEQDGSIFISSTDNEMNKKAKQII). The 69-residue stretch at 623–691 (GQIYLGKVKR…RQGRVNLSRK (69 aa)) folds into the S1 motif domain.

The protein belongs to the polyribonucleotide nucleotidyltransferase family. Mg(2+) is required as a cofactor.

It is found in the cytoplasm. The catalysed reaction is RNA(n+1) + phosphate = RNA(n) + a ribonucleoside 5'-diphosphate. Involved in mRNA degradation. Catalyzes the phosphorolysis of single-stranded polyribonucleotides processively in the 3'- to 5'-direction. The sequence is that of Polyribonucleotide nucleotidyltransferase from Oceanobacillus iheyensis (strain DSM 14371 / CIP 107618 / JCM 11309 / KCTC 3954 / HTE831).